The sequence spans 234 residues: Large ribosomal subunit protein uL1 (234 aa).

Belongs to the universal ribosomal protein uL1 family. Part of the 50S ribosomal subunit.

In terms of biological role, binds directly to 23S rRNA. The L1 stalk is quite mobile in the ribosome, and is involved in E site tRNA release. Protein L1 is also a translational repressor protein, it controls the translation of the L11 operon by binding to its mRNA. The polypeptide is Large ribosomal subunit protein uL1 (Anaeromyxobacter dehalogenans (strain 2CP-C)).